A 200-amino-acid polypeptide reads, in one-letter code: Intraflagellar transport protein 43 homolog (200 aa).

Disordered regions lie at residues 56–76 and 175–200; these read KTGK…IAAP and ERID…SSKY. Residues 175–192 show a composition bias toward basic and acidic residues; the sequence is ERIDAKDQPSDSRSRNAR.

This sequence belongs to the IFT43 family. As to quaternary structure, component of the IFT complex A (IFT-A) composed of at least che-11, daf-10, dyf-2, ift-139, ift-43 and ifta-1. Expressed in ciliated sensory neurons.

The protein localises to the cell projection. It localises to the cilium. Functionally, as a component of IFT complex A (IFT-A), a complex required for retrograde ciliary transport and entry into cilia of G protein-coupled receptors (GPCRs), it is involved in ciliogenesis. In particular, may act redundantly with the intraflagellar transport protein ift-139 to regulate the transport of specific ciliary cargo proteins such as che-3 which are related to motility. The polypeptide is Intraflagellar transport protein 43 homolog (Caenorhabditis elegans).